Reading from the N-terminus, the 284-residue chain is 4-diphosphocytidyl-2-C-methyl-D-erythritol kinase (284 aa).

Residue lysine 10 is part of the active site. 92 to 102 (PYGAGLGSGSS) is an ATP binding site. The active site involves aspartate 134.

Belongs to the GHMP kinase family. IspE subfamily.

It catalyses the reaction 4-CDP-2-C-methyl-D-erythritol + ATP = 4-CDP-2-C-methyl-D-erythritol 2-phosphate + ADP + H(+). Its pathway is isoprenoid biosynthesis; isopentenyl diphosphate biosynthesis via DXP pathway; isopentenyl diphosphate from 1-deoxy-D-xylulose 5-phosphate: step 3/6. Catalyzes the phosphorylation of the position 2 hydroxy group of 4-diphosphocytidyl-2C-methyl-D-erythritol. This Salinibacter ruber (strain DSM 13855 / M31) protein is 4-diphosphocytidyl-2-C-methyl-D-erythritol kinase.